A 470-amino-acid chain; its full sequence is Calcitonin gene-related peptide type 1 receptor (470 aa).

Residues 1 to 23 (MTASCWTICLFLLGSVTEFIVLA) form the signal peptide. Residues 24 to 147 (SPEVNESQQQ…HTTEGRRTAM (124 aa)) lie on the Extracellular side of the membrane. 4 N-linked (GlcNAc...) asparagine glycosylation sites follow: N28, N74, N126, and N131. 3 cysteine pairs are disulfide-bonded: C56/C82, C73/C113, and C96/C135. The helical transmembrane segment at 148–172 (NLFYLALIGHGLSLTSLFISLGIFF) threads the bilayer. The Cytoplasmic segment spans residues 173 to 183 (HFKSLSCQRIT). Residues 184–206 (LHKNLFFSFVLNSIITIIWLTAV) traverse the membrane as a helical segment. Topologically, residues 207-217 (ANNQELVQQNP) are extracellular. The helical transmembrane segment at 218-246 (ISCKISQFIHLYIFGCNYFWMLCEGIYLH) threads the bilayer. At 247–260 (TLIVVAVFAEKQHL) the chain is on the cytoplasmic side. The chain crosses the membrane as a helical span at residues 261–281 (MWYYLLGWGFPLIPATIHAVA). Residues 282–297 (RSYYYNDNCWISSNTS) are Extracellular-facing. N295 carries an N-linked (GlcNAc...) asparagine glycan. Residues 298–322 (LLYIIHGPICAAMLVNLFFLLNIVR) traverse the membrane as a helical segment. Residues 323–337 (VLITKLKVTHQAKSS) lie on the Cytoplasmic side of the membrane. Residues 338–359 (LYMKAVRATLILVPLLGIQYVL) form a helical membrane-spanning segment. At 360 to 374 (LPYKPSGRVSAEIYD) the chain is on the extracellular side. Residues 375-395 (YIMHILMHYQGLLVATIFCFF) traverse the membrane as a helical segment. The Cytoplasmic portion of the chain corresponds to 396 to 470 (NGEVQAVLRR…AIIKPENPFA (75 aa)).

It belongs to the G-protein coupled receptor 2 family.

Its subcellular location is the cell membrane. May function as G protein-coupled receptor for calcitonin-gene-related peptides and adrenomedullin. Specificity may be modulated by accessory proteins. May activate cAMP-dependent pathway. The polypeptide is Calcitonin gene-related peptide type 1 receptor (calcrla) (Danio rerio (Zebrafish)).